The sequence spans 423 residues: RNA polymerase sigma factor SigA (423 aa).

The interval 1-76 is disordered; sequence MKKSKRKNAQ…EEDLPIPKIS (76 aa). Residues 21–70 are compositionally biased toward acidic residues; it reads VQEEAEELPEFPEGEPDPDLEDPDLALEDDLLDLPEEGEGLDLEEEEEDL. The segment at 78-113 is sigma-70 factor domain-1; that stretch reads SDPVRQYLHEIGQVPLLTLEEEVELARKVEEGMEAI. The tract at residues 187–257 is sigma-70 factor domain-2; sequence LIEANLRLVV…NRAIADQART (71 aa). The short motif at 211-214 is the Interaction with polymerase core subunit RpoC element; that stretch reads DLIQ. A sigma-70 factor domain-3 region spans residues 266–344; that stretch reads ETINKLSRTA…DEHLPSPVDA (79 aa). The tract at residues 357–409 is sigma-70 factor domain-4; the sequence is ALSKLSEREAMVLKLRKGLIDGREHTLEEVGAFFGVTRERIRQIENKALRKLK. A DNA-binding region (H-T-H motif) is located at residues 383–402; it reads LEEVGAFFGVTRERIRQIEN.

The protein belongs to the sigma-70 factor family. RpoD/SigA subfamily. As to quaternary structure, interacts transiently with the RNA polymerase catalytic core formed by RpoA, RpoB, RpoC and RpoZ (2 alpha, 1 beta, 1 beta' and 1 omega subunit) to form the RNA polymerase holoenzyme that can initiate transcription.

Its subcellular location is the cytoplasm. In terms of biological role, sigma factors are initiation factors that promote the attachment of RNA polymerase to specific initiation sites and are then released. This sigma factor is the primary sigma factor during exponential growth. The chain is RNA polymerase sigma factor SigA from Thermus thermophilus (strain ATCC BAA-163 / DSM 7039 / HB27).